We begin with the raw amino-acid sequence, 496 residues long: Flt3-interacting zinc finger protein 1 (496 aa).

Met-1 is modified (N-acetylmethionine). C2H2-type zinc fingers lie at residues 23–45 (FHCS…FARH), 51–73 (HACP…LRSH), 79–101 (YRCS…QVVH), 107–130 (YCCL…KRQH), 200–222 (FACG…WAAH), and 228–250 (FKCP…KLTH). Residues 250–280 (HDLQGPGAPPAQAWAAGPGAGPETAGEGTAA) are disordered. Residues 259–280 (PAQAWAAGPGAGPETAGEGTAA) are compositionally biased toward low complexity. 5 consecutive C2H2-type zinc fingers follow at residues 331–352 (YQCD…LEAH), 358–381 (YGCG…RVSH), 414–436 (FGCS…VLVH), 442–464 (FPCL…RLLH), and 470–492 (FPCH…LKLH). The tract at residues 378–412 (RVSHGEGGGEEAATAAREREPASGEPPSGSGRGKK) is disordered.

As to quaternary structure, interacts with FLT3 cytoplasmic catalytic domain, following receptor stimulation, in a kinase-independent manner. Does not interact with other structurally related receptor tyrosine kinases, including KIT, CSF1R and PDGFR. Interacts with NRL. In terms of tissue distribution, widely expressed.

The protein resides in the cytoplasm. It is found in the nucleus. In terms of biological role, may be a transcriptional repressor of NRL function in photoreceptors. Does not repress CRX-mediated transactivation. The protein is Flt3-interacting zinc finger protein 1 (FIZ1) of Homo sapiens (Human).